Consider the following 294-residue polypeptide: Formamidopyrimidine-DNA glycosylase (294 aa).

Proline 2 serves as the catalytic Schiff-base intermediate with DNA. Glutamate 3 acts as the Proton donor in catalysis. Catalysis depends on lysine 58, which acts as the Proton donor; for beta-elimination activity. 3 residues coordinate DNA: histidine 105, arginine 124, and lysine 167. Residues glutamine 258–lysine 294 form an FPG-type zinc finger. Catalysis depends on arginine 284, which acts as the Proton donor; for delta-elimination activity.

This sequence belongs to the FPG family. Monomer. It depends on Zn(2+) as a cofactor.

The enzyme catalyses Hydrolysis of DNA containing ring-opened 7-methylguanine residues, releasing 2,6-diamino-4-hydroxy-5-(N-methyl)formamidopyrimidine.. The catalysed reaction is 2'-deoxyribonucleotide-(2'-deoxyribose 5'-phosphate)-2'-deoxyribonucleotide-DNA = a 3'-end 2'-deoxyribonucleotide-(2,3-dehydro-2,3-deoxyribose 5'-phosphate)-DNA + a 5'-end 5'-phospho-2'-deoxyribonucleoside-DNA + H(+). Its function is as follows. Involved in base excision repair of DNA damaged by oxidation or by mutagenic agents. Acts as a DNA glycosylase that recognizes and removes damaged bases. Has a preference for oxidized purines, such as 7,8-dihydro-8-oxoguanine (8-oxoG). Has AP (apurinic/apyrimidinic) lyase activity and introduces nicks in the DNA strand. Cleaves the DNA backbone by beta-delta elimination to generate a single-strand break at the site of the removed base with both 3'- and 5'-phosphates. This chain is Formamidopyrimidine-DNA glycosylase, found in Afipia carboxidovorans (strain ATCC 49405 / DSM 1227 / KCTC 32145 / OM5) (Oligotropha carboxidovorans).